The sequence spans 390 residues: MPVLTDPLQLLQALIRCPSVTPYEAGALSTLEQILTKMGFNVKRPVFTDKNTEDVENLYAKMGGEGRHLMFAGHTDVVPPGALEDWTYPPFEGVIDQGKLYGRGAVDMKGGIACFVAALARILEKRSIKGMVSLLITGDEEGPALNGTVKLLKWAEQKGEKWTAALVGEPTSVKTVGDVIKIGRRGSLSGVVTVKGRQGHVAFPERAANPLPLAGKLIQALTQTALDRGTENFQPSNLELTTIDTDNPAVNVIPAQTTIRFNIRYNDVWTKETLMTEIEKRLASVQLKNNDYQYPYYQLEWIPSLGSVFITKNDKLIKTLSNAIESVTGNIPEYSTSGGTSDARFIKDYCPVVEFGLPGQTMHMVDECVTLDAIETLTSVYERFIVDFFA.

H74 lines the Zn(2+) pocket. D76 is a catalytic residue. D107 contributes to the Zn(2+) binding site. E140 (proton acceptor) is an active-site residue. Residues E141, E169, and H363 each coordinate Zn(2+).

This sequence belongs to the peptidase M20A family. DapE subfamily. As to quaternary structure, homodimer. Zn(2+) serves as cofactor. Requires Co(2+) as cofactor.

The enzyme catalyses N-succinyl-(2S,6S)-2,6-diaminopimelate + H2O = (2S,6S)-2,6-diaminopimelate + succinate. It participates in amino-acid biosynthesis; L-lysine biosynthesis via DAP pathway; LL-2,6-diaminopimelate from (S)-tetrahydrodipicolinate (succinylase route): step 3/3. In terms of biological role, catalyzes the hydrolysis of N-succinyl-L,L-diaminopimelic acid (SDAP), forming succinate and LL-2,6-diaminopimelate (DAP), an intermediate involved in the bacterial biosynthesis of lysine and meso-diaminopimelic acid, an essential component of bacterial cell walls. The polypeptide is Succinyl-diaminopimelate desuccinylase (Bartonella quintana (strain Toulouse) (Rochalimaea quintana)).